We begin with the raw amino-acid sequence, 412 residues long: Putative competence-damage inducible protein (412 aa).

It belongs to the CinA family.

The sequence is that of Putative competence-damage inducible protein from Bacillus cereus (strain ATCC 14579 / DSM 31 / CCUG 7414 / JCM 2152 / NBRC 15305 / NCIMB 9373 / NCTC 2599 / NRRL B-3711).